The sequence spans 431 residues: Serine--tRNA ligase (431 aa).

235 to 237 contacts L-serine; that stretch reads TAE. Residues 266–268 and valine 282 contribute to the ATP site; that span reads RRE. An L-serine-binding site is contributed by glutamate 289. 353–356 is a binding site for ATP; sequence EASS. Serine 389 contributes to the L-serine binding site.

Belongs to the class-II aminoacyl-tRNA synthetase family. Type-1 seryl-tRNA synthetase subfamily. As to quaternary structure, homodimer. The tRNA molecule binds across the dimer.

It is found in the cytoplasm. The enzyme catalyses tRNA(Ser) + L-serine + ATP = L-seryl-tRNA(Ser) + AMP + diphosphate + H(+). It carries out the reaction tRNA(Sec) + L-serine + ATP = L-seryl-tRNA(Sec) + AMP + diphosphate + H(+). Its pathway is aminoacyl-tRNA biosynthesis; selenocysteinyl-tRNA(Sec) biosynthesis; L-seryl-tRNA(Sec) from L-serine and tRNA(Sec): step 1/1. In terms of biological role, catalyzes the attachment of serine to tRNA(Ser). Is also able to aminoacylate tRNA(Sec) with serine, to form the misacylated tRNA L-seryl-tRNA(Sec), which will be further converted into selenocysteinyl-tRNA(Sec). In Chlorobium phaeobacteroides (strain DSM 266 / SMG 266 / 2430), this protein is Serine--tRNA ligase.